Consider the following 436-residue polypeptide: Prenyltransferase nscD (436 aa).

Belongs to the tryptophan dimethylallyltransferase family.

It functions in the pathway secondary metabolite biosynthesis. In terms of biological role, prenyltransferase; part of the gene cluster that mediates the biosynthesis of neosartoricin B, a prenylated anthracenone that probably exhibits T-cell antiproliferative activity, suggestive of a physiological role as an immunosuppressive agent. The non-reducing polyketide synthase nscA probably synthesizes and cyclizes the decaketide backbone. The hydrolase nscB then mediates the product release through hydrolysis followed by spontaneous decarboxylation. The prenyltransferase nscD catalyzes the addition of the dimethylallyl group to the aromatic C5. The FAD-dependent monooxygenase nscC is then responsible for the stereospecific hydroxylation at C2. Neosartoricin B can be converted into two additional compounds neosartoricins C and D. Neosartoricin C is a spirocyclic compound that is cyclized through the attack of C3 hydroxyl on C14, followed by dehydration. On the other hand, neosartoricin D is a further cyclized compound in which attack of C2 on C14 in neosartoricin C results in the formation of the acetal-containing dioxabicyclo-octanone ring. Both of these compounds are novel and possibly represent related metabolites of the gene cluster. The sequence is that of Prenyltransferase nscD from Arthroderma gypseum (strain ATCC MYA-4604 / CBS 118893) (Microsporum gypseum).